Consider the following 465-residue polypeptide: Ribulose bisphosphate carboxylase large chain (465 aa).

N6,N6,N6-trimethyllysine is present on Lys-4. Asn-113 and Thr-163 together coordinate substrate. The active-site Proton acceptor is the Lys-165. Residue Lys-167 participates in substrate binding. Mg(2+)-binding residues include Lys-191, Asp-193, and Glu-194. Lys-191 bears the N6-carboxylysine mark. Residue His-284 is the Proton acceptor of the active site. Substrate contacts are provided by Arg-285, His-317, and Ser-369.

This sequence belongs to the RuBisCO large chain family. Type I subfamily. In terms of assembly, heterohexadecamer of 8 large chains and 8 small chains; disulfide-linked. The disulfide link is formed within the large subunit homodimers. Mg(2+) is required as a cofactor. Post-translationally, the disulfide bond which can form in the large chain dimeric partners within the hexadecamer appears to be associated with oxidative stress and protein turnover.

It is found in the plastid. Its subcellular location is the chloroplast. The enzyme catalyses 2 (2R)-3-phosphoglycerate + 2 H(+) = D-ribulose 1,5-bisphosphate + CO2 + H2O. It carries out the reaction D-ribulose 1,5-bisphosphate + O2 = 2-phosphoglycolate + (2R)-3-phosphoglycerate + 2 H(+). Functionally, ruBisCO catalyzes two reactions: the carboxylation of D-ribulose 1,5-bisphosphate, the primary event in carbon dioxide fixation, as well as the oxidative fragmentation of the pentose substrate in the photorespiration process. Both reactions occur simultaneously and in competition at the same active site. This Eucommia ulmoides (Hardy rubber tree) protein is Ribulose bisphosphate carboxylase large chain.